Consider the following 653-residue polypeptide: Multidomain regulatory protein MT1410 (653 aa).

Positions 86 to 142 constitute a PAC domain; it reads SGSEWRLQTDYDGSGVEERYFDFVVTPRRRADGSIEGVQLIVDDVTSRVRARQAAEA. Residues 177–396 form the PPM-type phosphatase domain; the sequence is DIAAEYLVAA…DDVTLLAMQR (220 aa). The Mn(2+) site is built by Asp-211, Val-212, Asp-328, and Asp-387. The tract at residues 397 to 544 is anti-sigma factor kinase region; the sequence is RAPTPPLHIT…TMVRRAAFQQ (148 aa). The STAS domain maps to 546 to 653; that stretch reads IDSEFVSLVE…ADTEDIFAQE (108 aa). A Phosphoserine modification is found at Ser-600.

Mg(2+) serves as cofactor. The cofactor is Mn(2+). In terms of processing, autophosphorylated.

The enzyme catalyses O-phospho-L-seryl-[protein] + H2O = L-seryl-[protein] + phosphate. The catalysed reaction is O-phospho-L-threonyl-[protein] + H2O = L-threonyl-[protein] + phosphate. It carries out the reaction L-seryl-[protein] + ATP = O-phospho-L-seryl-[protein] + ADP + H(+). It catalyses the reaction L-threonyl-[protein] + ATP = O-phospho-L-threonyl-[protein] + ADP + H(+). In terms of biological role, primarily acts as an independent SigF regulator that is sensitive to the osmosensory signal, mediating the cross talk of PknD with the SigF regulon. Possesses both phosphatase and kinase activities. The kinase domain functions as a classic anti-sigma factor-like kinase to phosphorylate the anti-anti-sigma factor domain at the canonical regulatory site, and the phosphatase domain antagonizes this activity. The chain is Multidomain regulatory protein MT1410 from Mycobacterium tuberculosis (strain CDC 1551 / Oshkosh).